A 142-amino-acid chain; its full sequence is MSQKLYILAKGIGRRKEAVAQVQLLAGSGQFIINGLPANLYLQEDPRSILAIDAPFKQLHVDHSADKDSLQTLDTIVKVQGGGKIGQANAIKLGVARALCEFNGEYRKSLKDSGFLTQDSRIKERRKYGLKKARKAPQYHKR.

The protein belongs to the universal ribosomal protein uS9 family.

Its subcellular location is the plastid. It is found in the chloroplast. This is Small ribosomal subunit protein uS9c (rps9) from Stigeoclonium helveticum (Green alga).